The following is a 120-amino-acid chain: uncharacterized protein (120 aa).

It to B.subtilis XkdH.

This is an uncharacterized protein from Bacillus subtilis (strain 168).